A 793-amino-acid chain; its full sequence is Lon protease 1 (793 aa).

The 195-residue stretch at 8–202 (VPVIPLKNSV…KLLDRLQELK (195 aa)) folds into the Lon N-terminal domain. 354 to 361 (GPPGVGKT) is a binding site for ATP. Positions 590–770 (LLPPGVVTGL…NEVLKITLGV (181 aa)) constitute a Lon proteolytic domain. Residues Ser676 and Lys719 contribute to the active site.

This sequence belongs to the peptidase S16 family. Homohexamer. Organized in a ring with a central cavity.

Its subcellular location is the cytoplasm. It catalyses the reaction Hydrolysis of proteins in presence of ATP.. Its function is as follows. ATP-dependent serine protease that mediates the selective degradation of mutant and abnormal proteins as well as certain short-lived regulatory proteins. Required for cellular homeostasis and for survival from DNA damage and developmental changes induced by stress. Degrades polypeptides processively to yield small peptide fragments that are 5 to 10 amino acids long. Binds to DNA in a double-stranded, site-specific manner. This chain is Lon protease 1, found in Bdellovibrio bacteriovorus (strain ATCC 15356 / DSM 50701 / NCIMB 9529 / HD100).